A 188-amino-acid chain; its full sequence is Peptidyl-tRNA hydrolase (188 aa).

Tyr14 lines the tRNA pocket. His19 serves as the catalytic Proton acceptor. Residues Tyr64, Asn66, and Asn112 each contribute to the tRNA site.

The protein belongs to the PTH family. As to quaternary structure, monomer.

It localises to the cytoplasm. It catalyses the reaction an N-acyl-L-alpha-aminoacyl-tRNA + H2O = an N-acyl-L-amino acid + a tRNA + H(+). In terms of biological role, hydrolyzes ribosome-free peptidyl-tRNAs (with 1 or more amino acids incorporated), which drop off the ribosome during protein synthesis, or as a result of ribosome stalling. Its function is as follows. Catalyzes the release of premature peptidyl moieties from peptidyl-tRNA molecules trapped in stalled 50S ribosomal subunits, and thus maintains levels of free tRNAs and 50S ribosomes. This is Peptidyl-tRNA hydrolase from Bacillus velezensis (strain DSM 23117 / BGSC 10A6 / LMG 26770 / FZB42) (Bacillus amyloliquefaciens subsp. plantarum).